The following is a 778-amino-acid chain: MSMTRRYSSTQYSNKMSLQSLSSLLLLVTLFFSPAFALKKSYIVYLGSHAHLPQISSAHLDGVAHSHRTFLASFVGSHENAKEAIFYSYKRHINGFAAILDENEAAEIAKHPDVVSVFPNKGRKLHTTHSWNFMLLAKNGVVHKSSLWNKAGYGEDTIIANLDTGVWPESKSFSDEGYGAVPARWKGRCHKDVPCNRKLIGARYFNKGYLAYTGLPSNASYETCRDHDGHGSHTLSTAAGNFVPGANVFGIGNGTASGGSPKARVAAYKVCWPPVDGAECFDADILAAIEAAIEDGVDVLSASVGGDAGDYMSDGIAIGSFHAVKNGVTVVCSAGNSGPKSGTVSNVAPWVITVGASSMDREFQAFVELKNGQSFKGTSLSKPLPEEKMYSLISAADANVANGNVTDALLCKKGSLDPKKVKGKILVCLRGDNARVDKGMQAAAAGAAGMVLCNDKASGNEIISDAHVLPASQIDYKDGETLFSYLSSTKDPKGYIKAPTATLNTKPAPFMASFSSRGPNTITPGILKPDITAPGVNIIAAFTEATGPTDLDSDNRRTPFNTESGTSMSCPHISGVVGLLKTLHPHWSPAAIRSAIMTTSRTRNNRRKPMVDESFKKANPFSYGSGHVQPNKAAHPGLVYDLTTGDYLDFLCAVGYNNTVVQLFAEDPQYTCRQGANLLDFNYPSITVPNLTGSITVTRKLKNVGPPATYNARFREPLGVRVSVEPKQLTFNKTGEVKIFQMTLRPLPVTPSGYVFGELTWTDSHHYVRSPIVVQLSS.

The N-terminal stretch at 1–35 (MSMTRRYSSTQYSNKMSLQSLSSLLLLVTLFFSPA) is a signal peptide. The region spanning 41-126 (SYIVYLGSHA…VFPNKGRKLH (86 aa)) is the Inhibitor I9 domain. In terms of domain architecture, Peptidase S8 spans 130-634 (SWNFMLLAKN…SGHVQPNKAA (505 aa)). Catalysis depends on Asp163, which acts as the Charge relay system. Asn218 is a glycosylation site (N-linked (GlcNAc...) asparagine). His230 serves as the catalytic Charge relay system. Asn253 and Asn404 each carry an N-linked (GlcNAc...) asparagine glycan. The PA domain occupies 401–486 (ANGNVTDALL…KDGETLFSYL (86 aa)). Ser567 functions as the Charge relay system in the catalytic mechanism. N-linked (GlcNAc...) asparagine glycans are attached at residues Asn657, Asn690, and Asn732.

Belongs to the peptidase S8 family. As to expression, expressed in the vasculature of roots and leaves, stomata, sepals, stigma, anthers and siliques.

The protein resides in the endoplasmic reticulum. It is found in the cell membrane. In terms of biological role, serine protease. Has a substrate preference for the hydrophobic residues Phe and Ala and the basic residue Asp in the P1 position, and for Asp, Leu or Ala in the P1' position. Interferes with CLAVATA 3 (CLV3) signaling, but does not cleave CLV3. The protein is Subtilisin-like protease SBT5.4 of Arabidopsis thaliana (Mouse-ear cress).